A 2212-amino-acid polypeptide reads, in one-letter code: Voltage-dependent P/Q-type calcium channel subunit alpha-1A (2212 aa).

The Cytoplasmic portion of the chain corresponds to 1–100 (MARFGDEMPG…KYAKKITEWP (100 aa)). An I repeat occupies 87-365 (NVVRKYAKKI…LVLGVLSGEF (279 aa)). The helical transmembrane segment at 101-119 (PFEYMILATIIANCIVLAL) threads the bilayer. The Extracellular portion of the chain corresponds to 120 to 138 (EQHLPDDDKTPMSERLDDT). Residues 139–156 (EPYFIGIFCFEAGIKIVA) traverse the membrane as a helical segment. Residues 157–168 (LGFAFHKGSYLR) lie on the Cytoplasmic side of the membrane. Residues 169 to 184 (NGWNVMDFVVVLTGIL) form a helical membrane-spanning segment. Over 185–192 (ATVGTEFD) the chain is Extracellular. The chain crosses the membrane as a helical span at residues 193–211 (LRTLRAVRVLRPLKLVSGI). Over 212–230 (PSLQVVLKSIMKAMIPLLQ) the chain is Cytoplasmic. The helical transmembrane segment at 231–250 (IGLLLFFAILIFAIIGLEFY) threads the bilayer. At 251–337 (MGKFHTTCFE…NSNDASGNTW (87 aa)) the chain is on the extracellular side. A glycan (N-linked (GlcNAc...) asparagine) is linked at Asn285. Glu320 is a Ca(2+) binding site. Residues 338–362 (NWLYFIPLIIIGSFFMLNLVLGVLS) form a helical membrane-spanning segment. The Cytoplasmic portion of the chain corresponds to 363 to 489 (GEFAKERERV…FYIRRMVKTQ (127 aa)). The binding to the beta subunit stretch occupies residues 385-402 (QQIERELNGYMEWISKAE). Thr411 carries the phosphothreonine modification. Ser450 and Ser453 each carry phosphoserine. The stretch at 475–719 (ERRMRFYIRR…VFLAIAVDNL (245 aa)) is one II repeat. A helical transmembrane segment spans residues 490 to 509 (AFYWTVLSLVALNTLWLAIV). Residues 510–523 (HYNQPEWLSDFLYY) are Extracellular-facing. A helical membrane pass occupies residues 524–543 (AEFIFLGLFMSEMFIKMYGL). The Cytoplasmic segment spans residues 544 to 551 (GTRPYFHS). Residues 552–570 (SFNCFDCGVIIGSIFEVIW) traverse the membrane as a helical segment. Residues 571 to 580 (AVIKPGTSFG) are Extracellular-facing. A helical transmembrane segment spans residues 581–599 (ISVLRALRLLRIFKVTKYW). Residues 600-618 (ASLRNLVVSLLNSMKSIIS) are Cytoplasmic-facing. The chain crosses the membrane as a helical span at residues 619-638 (LLFLLFLFIVVFALLGMQLF). The Extracellular segment spans residues 639 to 691 (GGQFNFDEGTPPTNFDTFPAAIMTVFQILTGEDWNEVMYDEIKSQGGVQGGMV). Glu670 contacts Ca(2+). Residues 692–716 (FSIYFIVLTLFGNYTLLNVFLAIAV) form a helical membrane-spanning segment. Residues 717–1190 (DNLANAQELT…TNPLRRLCHY (474 aa)) lie on the Cytoplasmic side of the membrane. Phosphoserine occurs at positions 752, 755, and 792. Basic and acidic residues-rich tracts occupy residues 814-824 (PDVKTHLDRPL), 850-862 (RPRE…DARR), 871-924 (APGR…EGEP), and 932-958 (RPGD…RAAD). Disordered stretches follow at residues 814–1117 (PDVK…RKPE) and 1137–1170 (VNKN…KPMP). Phosphoserine occurs at positions 1038, 1042, and 1051. The span at 1056 to 1073 (GNSTNPGPALATNPQNAA) shows a compositional bias: polar residues. Positions 1074–1083 (SRRTPNNPGN) are enriched in low complexity. A compositionally biased stretch (polar residues) spans 1094–1111 (ENSLIVTNPSSTQPNSAK). Over residues 1153 to 1163 (KKEEEEADPGE) the composition is skewed to acidic residues. The III repeat unit spans residues 1182–1465 (NPLRRLCHYI…IFVALIIITF (284 aa)). The chain crosses the membrane as a helical span at residues 1191–1214 (ILNLRYFEMCILMVIAMSSIALAA). At 1215–1231 (EDPVQPNAPRNNVLRYF) the chain is on the extracellular side. Residues 1232 to 1251 (DYVFTGVFTFEMVIKMIDLG) traverse the membrane as a helical segment. Residues 1252–1258 (LVLHQGA) are Cytoplasmic-facing. A helical transmembrane segment spans residues 1259–1282 (YFRDLWNILDFIVVSGALVAFAFT). The Extracellular segment spans residues 1283 to 1293 (GNSKGKDINTI). The chain crosses the membrane as a helical span at residues 1294 to 1311 (KSLRVLRVLRPLKTIKRL). Residues 1312–1330 (PKLKAVFDCVVNSLKNVFN) are Cytoplasmic-facing. Residues 1331 to 1350 (ILIVYMLFMFIFAVVAVQLF) traverse the membrane as a helical segment. Residues 1351-1437 (KGKFFHCTDE…QGPSPGYRME (87 aa)) are Extracellular-facing. Glu1411 is a binding site for Ca(2+). Residues 1438–1462 (MSIFYVVYFVVFPFFFVNIFVALII) form a helical membrane-spanning segment. Residues 1463 to 1518 (ITFQEQGDKMMEEYSLEKNERACIDFAISAKPLTRHMPQNKQSFQYRMWQFVVSPP) lie on the Cytoplasmic side of the membrane. The IV repeat unit spans residues 1502–1765 (NKQSFQYRMW…LFVAVIMDNF (264 aa)). The chain crosses the membrane as a helical span at residues 1519-1537 (FEYTIMAMIALNTIVLMMK). The Extracellular segment spans residues 1538-1551 (FYGASVAYENALRV). Residues 1552 to 1573 (FNIVFTSLFSLECVLKVMAFGI) traverse the membrane as a helical segment. Residues 1574-1580 (LNYFRDA) lie on the Cytoplasmic side of the membrane. Residues 1581 to 1600 (WNIFDFVTVLGSITDILVTE) traverse the membrane as a helical segment. At 1601 to 1607 (FGNNFIN) the chain is on the extracellular side. N-linked (GlcNAc...) asparagine glycosylation is present at Asn1607. A helical membrane pass occupies residues 1608 to 1626 (LSFLRLFRAARLIKLLRQG). Topologically, residues 1627 to 1645 (YTIRILLWTFVQSFKALPY) are cytoplasmic. A helical membrane pass occupies residues 1646–1665 (VCLLIAMLFFIYAIIGMQVF). Residues 1666–1737 (GNIGIDGEDE…IQKPECGNEF (72 aa)) lie on the Extracellular side of the membrane. The helical transmembrane segment at 1738-1763 (AYFYFVSFIFLCSFLMLNLFVAVIMD) threads the bilayer. Over 1764–2212 (NFEYLTRDSS…EGREHATHRQ (449 aa)) the chain is Cytoplasmic. Residue Thr1935 is modified to Phosphothreonine. The disordered stretch occupies residues 1940 to 2212 (QRMEPPSPTQ…EGREHATHRQ (273 aa)). Composition is skewed to polar residues over residues 1948 to 1963 (TQEG…STQL) and 1972 to 1997 (QESS…TGTW). Residues Ser1998, Ser2016, Ser2028, Ser2030, Ser2071, and Ser2091 each carry the phosphoserine modification. Residues 2008 to 2017 (PNSQPNSQSV) are compositionally biased toward polar residues. Residues 2018–2034 (EMREMGTDGYSDSEHYL) are compositionally biased toward basic and acidic residues. Positions 2064-2073 (LSTISDTSPM) are enriched in polar residues. Composition is skewed to basic and acidic residues over residues 2085–2102 (RRLD…ENQR) and 2143–2153 (PSKDRDQDRGR). Basic residues predominate over residues 2154–2172 (PKDRKHRPHHHHHHHHHHP). A compositionally biased stretch (basic and acidic residues) spans 2173–2212 (PAPDRERYAQERPDTGRARAREQRWSRSPSEGREHATHRQ).

This sequence belongs to the calcium channel alpha-1 subunit (TC 1.A.1.11) family. CACNA1A subfamily. Voltage-dependent calcium channels are multisubunit complexes, consisting of alpha-1, alpha-2, beta and delta subunits in a 1:1:1:1 ratio. The channel activity is directed by the pore-forming and voltage-sensitive alpha-1 subunit. In many cases, this subunit is sufficient to generate voltage-sensitive calcium channel activity. The auxiliary subunits beta and alpha-2/delta linked by a disulfide bridge regulate the channel activity. Interacts (via C-terminal CDB motif) with CABP1 in the pre- and postsynaptic membranes. Interacts with the spider omega-agatoxin-IVA (AC P30288). Interacts with TSPOAP1. In terms of tissue distribution, brain specific. Purkinje cells contain predominantly P-type VSCC, the Q-type being a prominent calcium current in cerebellar granule cells. Also found in heart, in kidney distal convoluted tubule (DCT), and in pituitary.

It localises to the cell membrane. The catalysed reaction is Ca(2+)(in) = Ca(2+)(out). Its function is as follows. Voltage-sensitive calcium channels (VSCC) mediate the entry of calcium ions into excitable cells and are also involved in a variety of calcium-dependent processes, including muscle contraction, hormone or neurotransmitter release, gene expression, cell motility, cell division and cell death. The isoform alpha-1A gives rise to P and/or Q-type calcium currents. P/Q-type calcium channels belong to the 'high-voltage activated' (HVA) group and are specifically blocked by the spider omega-agatoxin-IVA (AC P30288). They are however insensitive to dihydropyridines (DHP). In Rattus norvegicus (Rat), this protein is Voltage-dependent P/Q-type calcium channel subunit alpha-1A.